A 525-amino-acid polypeptide reads, in one-letter code: MLLPKELKYAAIAGGVAVFGLIFGWVLFPVILKGQLKKEMALSKKTDVRKMWEQIPFALEFKVYLFNYTNAEEVQKGAKPILKEIGPYHFDEWKEKVEIEDHEEDDTITYKRRDAFYFNPEMSAPGLTGEEIVVIPHIFMLGMALTVHRDKPAMLNMVGKAMNGIFDSPPDIFMRVKALDILFRGIIINCARTEFAPKATCTALKKEGVSGLVLEPNNQFRFSVFGTRNNTIDPHVITVKRGIKNVMDVGQVVAVDGKTEQTIWRDACNEYQGTDGTVFPPFLTENDRIQSFSTDLCRSFKPWYQKKTSYRGIKTNRYIANIGNFSEDPELHCFCPDPDKCPPKGLMDLAPCIKAPMYASMPHFLDSDPALLNNVKGLNPDINQHGIEIDFEPISGTPMVAKQRIQFNLQLLKTEKIDLFKDLSGDIVPLFWIDEGLALNKTFVNMLKHQLFIPKRVVGVLRWWMVSFGSLGADIGIVYHFRDHIMRLAVSGDTKVSKVTPEEDPEQKDISVIGPPAQEPAKINI.

The Cytoplasmic segment spans residues Met-1–Ala-11. A helical transmembrane segment spans residues Ile-12–Leu-32. Residues Lys-33 to Arg-456 lie on the Extracellular side of the membrane. Residues Asn-67, Asn-229, and Asn-324 are each glycosylated (N-linked (GlcNAc...) asparagine). Cystine bridges form between Cys-268–Cys-333, Cys-297–Cys-352, and Cys-335–Cys-341. N-linked (GlcNAc...) asparagine glycosylation is present at Asn-440. The helical transmembrane segment at Val-457–Ile-477 threads the bilayer. Over Val-478 to Ile-525 the chain is Cytoplasmic. Residues Ser-497 to Ile-525 are disordered.

The protein belongs to the CD36 family.

It is found in the cell membrane. Plays an olfactory role that is not restricted to pheromone sensitivity. The chain is Sensory neuron membrane protein 1 from Mamestra brassicae (Cabbage moth).